We begin with the raw amino-acid sequence, 533 residues long: DNA primase large subunit (533 aa).

C298, C377, C393, and C433 together coordinate [4Fe-4S] cluster. Residues 466–492 (RQKRANGSAPPKARIRPDIKGHGDRSM) are disordered. The segment covering 480-490 (IRPDIKGHGDR) has biased composition (basic and acidic residues).

The protein belongs to the eukaryotic-type primase large subunit family. Heterodimer of a catalytic subunit Prim1 and a regulatory subunit Prim2, also known as the DNA primase complex. Component of the alpha DNA polymerase complex (also known as the alpha DNA polymerase-primase complex) consisting of four subunits: the catalytic subunit PolA1, the regulatory subunit PolA2, and the primase complex subunits Prim1 and Prim2 respectively. PolA1 associates with the DNA primase complex before association with PolA2. The cofactor is [4Fe-4S] cluster. In terms of tissue distribution, expressed in embryos (at protein level).

Functionally, regulatory subunit of the DNA primase complex and component of the DNA polymerase alpha complex (also known as the alpha DNA polymerase-primase complex) which play an essential role in the initiation of DNA synthesis. During the S phase of the cell cycle, the DNA polymerase alpha complex (composed of a catalytic subunit PolA1, an accessory subunit PolA2 and two primase subunits, the catalytic subunit Prim1 and the regulatory subunit Prim2) is recruited to DNA at the replicative forks. The primase subunit of the polymerase alpha complex initiates DNA synthesis by oligomerising short RNA primers on both leading and lagging strands. These primers are initially extended by the polymerase alpha catalytic subunit and subsequently transferred to polymerase delta and polymerase epsilon for processive synthesis on the lagging and leading strand, respectively. In the primase complex, both subunits are necessary for the initial di-nucleotide formation, but the extension of the primer depends only on the catalytic subunit. Stabilizes and modulates the activity of the catalytic subunit. This is DNA primase large subunit from Drosophila melanogaster (Fruit fly).